A 534-amino-acid polypeptide reads, in one-letter code: MLHCSFLRVIPIKNASKRLIIVRSLTSAPAKTSEAEKQQDSLKNIDAGEKYTALGNIRQKKDVFHYTDRASGVGYSHYSSSVYQHRPYIWPPLRKLYHWNYALVIAGMVILMSDFEWLKDQIKSASLPFRPEASQKEEVTESNGEVEEVKEKPKKKKLGFRERRIIEYEDRLRLYSTPDKIFRYFATLKIIDPNEDSGRFEVFMTPEDFLRSFTPGVMQPRRWGLDSFKNYNPEKHKRHKFSDPDSIFYKLGENGLINFSDYLFLMTLLSTSHADFALAFKIFDVDGNGALDKEEFTKVQQLIMSQTTVGQRHRDHITPNQSFRVETNSALETYFFGKDGKGSLSSEKFIEFQERLQHDILKMEFERRDALDNPDGLINEDSFAQLLLLHAQINEKKQKHMLKRVKRRFKGENLKGISFGETKAFFEFLYHIDDVDIALHFHKMAGMSIDAKLLQRVAVKVTGIPLSDHVVDVVITLFDDNLDGKLSHEEMVAVMRRRMRRGLERPRDTGLFRLFDAVLECGKRAYHASPLPFY.

A mitochondrion-targeting transit peptide spans 1 to 32; that stretch reads MLHCSFLRVIPIKNASKRLIIVRSLTSAPAKT. Positions 131-150 are disordered; sequence PEASQKEEVTESNGEVEEVK. EF-hand domains follow at residues 271-306, 338-359, and 466-501; these read TSHADFALAFKIFDVDGNGALDKEEFTKVQQLIMSQ, KDGKGSLSSEKFIEFQERLQHD, and LSDHVVDVVITLFDDNLDGKLSHEEMVAVMRRRMRR. Positions 284, 286, 288, and 295 each coordinate Ca(2+).

It belongs to the MICU1 family. MICU1 subfamily. Expressed at low levels in PLM touch receptor neurons, germ cells, epidermis, and muscles.

It is found in the mitochondrion intermembrane space. It localises to the mitochondrion inner membrane. Functionally, calcium sensor of the mitochondrial calcium uniporter (mcu-1) channel, which senses calcium level via its EF-hand domains. At low calcium levels, micu-1 occludes the pore of the mcu-1 channel, preventing mitochondrial calcium uptake. At higher calcium levels, calcium-binding to micu-1 induces a conformational change that weakens mcu-1-micu-1 interactions and moves micu-1 away from the pore, allowing calcium permeation through the mcu-1 channel. Also required to protect against manganese toxicity by preventing manganese uptake by mcu-1. Modulates the activity of the mitochondrial calcium uniporter protein mcu-1 depending on the level of intracellular calcium in PLM touch receptor neurons following axonal injury. The polypeptide is Calcium uptake protein 1 homolog, mitochondrial (Caenorhabditis elegans).